Consider the following 391-residue polypeptide: Na(+)/H(+) antiporter NhaA 1 (391 aa).

11 helical membrane passes run 25-45 (AGGIVLMVAALAALIVANSPL), 56-76 (VWLGLSVELWINDGLMAIFFL), 98-118 (ALPGFAAAGGMLVPALIYIAI), 128-148 (GWAIPAATDIAFALGVLSLLG), 157-177 (VFLAALAILDDLGAVTIIAFF), 180-200 (AGLNLPMLAAAFVTLAVLIVM), 208-228 (LLPYLLLGALLWFFVLQSGVH), 264-284 (VAFAVVPIFGFANAGVSLAGI), 297-317 (VALGLFVGKQIGVFLAAVLAI), 335-355 (GVAMLCGIGFTMSLFIGNLAF), and 364-384 (EVKVGVLIGSGLAAIAGIVLL).

Belongs to the NhaA Na(+)/H(+) (TC 2.A.33) antiporter family.

It localises to the cell inner membrane. It carries out the reaction Na(+)(in) + 2 H(+)(out) = Na(+)(out) + 2 H(+)(in). Functionally, na(+)/H(+) antiporter that extrudes sodium in exchange for external protons. The chain is Na(+)/H(+) antiporter NhaA 1 from Pseudomonas syringae pv. syringae (strain B728a).